The sequence spans 461 residues: Bifunctional protein GlmU (461 aa).

Residues Met1–Arg229 are pyrophosphorylase. Residues Leu8 to Gly11, Lys22, Gln72, and Gly77 to Thr78 each bind UDP-N-acetyl-alpha-D-glucosamine. Position 102 (Asp102) interacts with Mg(2+). The UDP-N-acetyl-alpha-D-glucosamine site is built by Gly139, Glu154, Asn169, and Asn227. Asn227 serves as a coordination point for Mg(2+). Positions Val230–Asp250 are linker. The segment at Gly251–Glu461 is N-acetyltransferase. The UDP-N-acetyl-alpha-D-glucosamine site is built by Arg332 and Lys350. Residue His362 is the Proton acceptor of the active site. Residues Tyr365 and Asn376 each coordinate UDP-N-acetyl-alpha-D-glucosamine. Residues Asn385–Tyr386, Ala422, and Arg439 each bind acetyl-CoA.

It in the N-terminal section; belongs to the N-acetylglucosamine-1-phosphate uridyltransferase family. In the C-terminal section; belongs to the transferase hexapeptide repeat family. As to quaternary structure, homotrimer. The cofactor is Mg(2+).

It localises to the cytoplasm. It catalyses the reaction alpha-D-glucosamine 1-phosphate + acetyl-CoA = N-acetyl-alpha-D-glucosamine 1-phosphate + CoA + H(+). The catalysed reaction is N-acetyl-alpha-D-glucosamine 1-phosphate + UTP + H(+) = UDP-N-acetyl-alpha-D-glucosamine + diphosphate. It participates in nucleotide-sugar biosynthesis; UDP-N-acetyl-alpha-D-glucosamine biosynthesis; N-acetyl-alpha-D-glucosamine 1-phosphate from alpha-D-glucosamine 6-phosphate (route II): step 2/2. The protein operates within nucleotide-sugar biosynthesis; UDP-N-acetyl-alpha-D-glucosamine biosynthesis; UDP-N-acetyl-alpha-D-glucosamine from N-acetyl-alpha-D-glucosamine 1-phosphate: step 1/1. Its pathway is bacterial outer membrane biogenesis; LPS lipid A biosynthesis. Its function is as follows. Catalyzes the last two sequential reactions in the de novo biosynthetic pathway for UDP-N-acetylglucosamine (UDP-GlcNAc). The C-terminal domain catalyzes the transfer of acetyl group from acetyl coenzyme A to glucosamine-1-phosphate (GlcN-1-P) to produce N-acetylglucosamine-1-phosphate (GlcNAc-1-P), which is converted into UDP-GlcNAc by the transfer of uridine 5-monophosphate (from uridine 5-triphosphate), a reaction catalyzed by the N-terminal domain. In Lactobacillus helveticus (strain DPC 4571), this protein is Bifunctional protein GlmU.